Reading from the N-terminus, the 124-residue chain is Small ribosomal subunit protein uS12 (124 aa).

The residue at position 89 (Asp-89) is a 3-methylthioaspartic acid.

Belongs to the universal ribosomal protein uS12 family. As to quaternary structure, part of the 30S ribosomal subunit. Contacts proteins S8 and S17. May interact with IF1 in the 30S initiation complex.

Its function is as follows. With S4 and S5 plays an important role in translational accuracy. Interacts with and stabilizes bases of the 16S rRNA that are involved in tRNA selection in the A site and with the mRNA backbone. Located at the interface of the 30S and 50S subunits, it traverses the body of the 30S subunit contacting proteins on the other side and probably holding the rRNA structure together. The combined cluster of proteins S8, S12 and S17 appears to hold together the shoulder and platform of the 30S subunit. This is Small ribosomal subunit protein uS12 from Vibrio vulnificus (strain CMCP6).